A 556-amino-acid polypeptide reads, in one-letter code: 2-succinyl-5-enolpyruvyl-6-hydroxy-3-cyclohexene-1-carboxylate synthase (556 aa).

This sequence belongs to the TPP enzyme family. MenD subfamily. In terms of assembly, homodimer. Mg(2+) is required as a cofactor. The cofactor is Mn(2+). It depends on thiamine diphosphate as a cofactor.

It carries out the reaction isochorismate + 2-oxoglutarate + H(+) = 5-enolpyruvoyl-6-hydroxy-2-succinyl-cyclohex-3-ene-1-carboxylate + CO2. The protein operates within quinol/quinone metabolism; 1,4-dihydroxy-2-naphthoate biosynthesis; 1,4-dihydroxy-2-naphthoate from chorismate: step 2/7. It functions in the pathway quinol/quinone metabolism; menaquinone biosynthesis. In terms of biological role, catalyzes the thiamine diphosphate-dependent decarboxylation of 2-oxoglutarate and the subsequent addition of the resulting succinic semialdehyde-thiamine pyrophosphate anion to isochorismate to yield 2-succinyl-5-enolpyruvyl-6-hydroxy-3-cyclohexene-1-carboxylate (SEPHCHC). The polypeptide is 2-succinyl-5-enolpyruvyl-6-hydroxy-3-cyclohexene-1-carboxylate synthase (Salmonella gallinarum (strain 287/91 / NCTC 13346)).